The following is a 1294-amino-acid chain: Ethylene-insensitive protein 2 (1294 aa).

Over 1–12 (MEAEIVNVRPQL) the chain is Cytoplasmic. Residues 13–33 (GFIQRMVPALLPVLLVSVGYI) form a helical membrane-spanning segment. Residues 34–50 (DPGKWVANIEGGARFGY) are Extracellular-facing. A helical transmembrane segment spans residues 51 to 71 (DLVAITLLFNFAAILCQYVAA). Residues 72 to 105 (RISVVTGKHLAQICNEEYDKWTCMFLGIQAEFSA) lie on the Cytoplasmic side of the membrane. Residues 106–126 (ILLDLTMVVGVAHALNLLFGV) traverse the membrane as a helical segment. A topological domain (extracellular) is located at residue Glu-127. Residues 128 to 148 (LSTGVFLAAMDAFLFPVFASF) form a helical membrane-spanning segment. Topologically, residues 149–155 (LENGMAN) are cytoplasmic. A helical membrane pass occupies residues 156 to 176 (TVSIYSAGLVLLLYVSGVLLS). Residues 177–194 (QSEIPLSMNGVLTRLNGE) lie on the Extracellular side of the membrane. The chain crosses the membrane as a helical span at residues 195-215 (SAFALMGLLGASIVPHNFYIH). Topologically, residues 216 to 237 (SYFAGESTSSSDVDKSSLCQDH) are cytoplasmic. A helical transmembrane segment spans residues 238–258 (LFAIFGVFSGLSLVNYVLMNA). Residues 259 to 287 (AANVFHSTGLVVLTFHDALSLMEQVFMSP) lie on the Extracellular side of the membrane. A helical transmembrane segment spans residues 288–308 (LIPVVFLMLLFFSSQITALAW). Residues 309–334 (AFGGEVVLHDFLKIEIPAWLHRATIR) are Cytoplasmic-facing. A run of 2 helical transmembrane segments spans residues 335–355 (ILAV…GIYQ) and 356–376 (LLIF…IPLF). Residues 377–397 (RIASSRQIMGVHKIPQVGEFL) lie on the Cytoplasmic side of the membrane. Residues 398 to 418 (ALTTFLGFLGLNVVFVVEMVF) form a helical membrane-spanning segment. At 419–440 (GSSDWAGGLRWNTVMGTSIQYT) the chain is on the extracellular side. Residues 441–461 (TLLVSSCASLCLILWLAATPL) traverse the membrane as a helical segment. Residues 462 to 1294 (KSASNRAEAQ…KNVTAYGSLG (833 aa)) lie on the Cytoplasmic side of the membrane. 2 disordered regions span residues 534 to 561 (TDQE…SSLK) and 623 to 662 (ETEE…SLSR). Over residues 536 to 550 (QEIRSSPPEERELDV) the composition is skewed to basic and acidic residues. Phosphoserine is present on residues Ser-645, Ser-659, and Ser-757. Phosphothreonine is present on Thr-819. A Phosphoserine modification is found at Ser-924. Residues 1262–1269 (LKRYKRRL) carry the Nuclear localization signal motif. Residues 1269 to 1294 (LSNKPVGMNQDGPGSRKNVTAYGSLG) form a disordered region. Position 1283 is a phosphoserine (Ser-1283).

Belongs to the NRAMP (TC 2.A.55) family. In terms of assembly, interacts (via NLS) with ETR1. Interacts (via C-terminus) with EER5 and the COP9 signalosome subunits CSN3, CSN6A and CSN6B. Interacts with ETP1 and ETP2. Interacts with CTR1. Interacts with all members of the ethylene receptor family, including ETR1, ETR2, ERS1, ERS2 and EIN4. Binds to MRF3/ECIP1. Interacts with several P-body components, such as XRN4/EIN5, PAB2, PAB4 and PAB8. Binds to ENAP1 in the presence of ethylene; this reaction facilitates its association with histone. In terms of processing, phosphorylated by CTR1 on at least 4 sites. Phosphorylation of Ser-645 and Ser-924 is involved in repressing EIN2 signaling. Loss of phosphorylation results in nuclear localization of the C-terminus of EIN2. In terms of tissue distribution, localized to the guard cells after methyl jasmonate treatment.

The protein localises to the endoplasmic reticulum membrane. The protein resides in the nucleus. It is found in the cytoplasm. Central factor in signaling pathways regulated by ethylene (ET) and involved in various processes including development, plant defense, senescence, nucleotide sugar flux, and tropisms. Necessary for ethylene-mediated gene regulation, and for the induction of some genes by ozone. Acts downstream of ET receptors, and upstream of ethylene regulated transcription factors. Required for cytokinin-mediated processes. Seems to be implicated in cross-talk between ET, jasmonate and other pathways. Probably not involved in iron uptake. Has a short half-life and undergoes rapid proteasome-mediated turnover in the absence of ethylene. Required for ethylene-induced EIN3 stabilization via proteasomal degradation of EBF1/EBF2 proteins. Regulates the leaf senescence induced by methyl jasmonate, ethylene and abscisic acid. Required during salt stress to confer resistance. Functionally, trafficking signal inducing ethylene response. The nuclear localization is both necessary and sufficient to activate EIN3-mediated transcription and ethylene responses. Involved in ethylene (ET)-mediated signaling pathways by triggering histone acetylation of H3K14 and H3K23 in an ENAP1-dependent manner, thus influencing the expression of ethylene-responsive genes. Necessary and sufficient for 3'-UTR-mediated translational repression of EBF1 and EBF2 mRNAs. Ethylene induces EIN2-CEND to associate with 3' UTRs in cytoplasmic foci and target EBF1/2 mRNAs to cytoplasmic processing-body (P-body). MPK6 regulates the cleavage and nuclear translocation of EIN2-CEND under methyl jasmonate treatment. Required for EIN3 accumulation. This Arabidopsis thaliana (Mouse-ear cress) protein is Ethylene-insensitive protein 2.